The chain runs to 570 residues: Sulfite reductase [NADPH] hemoprotein beta-component (570 aa).

[4Fe-4S] cluster-binding residues include Cys434, Cys440, Cys479, and Cys483. A siroheme-binding site is contributed by Cys483.

The protein belongs to the nitrite and sulfite reductase 4Fe-4S domain family. In terms of assembly, alpha(8)-beta(8). The alpha component is a flavoprotein, the beta component is a hemoprotein. It depends on siroheme as a cofactor. Requires [4Fe-4S] cluster as cofactor.

It carries out the reaction hydrogen sulfide + 3 NADP(+) + 3 H2O = sulfite + 3 NADPH + 4 H(+). The protein operates within sulfur metabolism; hydrogen sulfide biosynthesis; hydrogen sulfide from sulfite (NADPH route): step 1/1. Its function is as follows. Component of the sulfite reductase complex that catalyzes the 6-electron reduction of sulfite to sulfide. This is one of several activities required for the biosynthesis of L-cysteine from sulfate. The sequence is that of Sulfite reductase [NADPH] hemoprotein beta-component from Salmonella heidelberg (strain SL476).